Reading from the N-terminus, the 450-residue chain is Cytidylate cyclase (450 aa).

Positions 97 to 236 (VTMFVDIRKS…LPVDMTAKLQ (140 aa)) constitute a Guanylate cyclase domain. Residue phenylalanine 100 participates in a ribonucleoside 5'-triphosphate binding. Positions 102, 103, and 146 each coordinate Mn(2+). Positions 318–450 (PNQFNFECFV…YRNIIGVYIK (133 aa)) are AGS-C domain.

Belongs to the adenylyl cyclase class-4/guanylyl cyclase family. Pyrimidine cyclase subfamily. In terms of assembly, homodimer. Mn(2+) is required as a cofactor.

Its subcellular location is the cytoplasm. It carries out the reaction CTP = 3',5'-cyclic CMP + diphosphate. With respect to regulation, in E.coli strain MG1655 transformed with both genes cCMP appears between 15 and 30 minutes after infection with phage T5 (at protein level). No cCMP accumulates in uninfected cells. In terms of biological role, pycsar (pyrimidine cyclase system for antiphage resistance) provides immunity against bacteriophage. The pyrimidine cyclase (PycC) synthesizes cyclic nucleotides in response to infection; these serve as specific second messenger signals. The signal activates the adjacent effector, leading to bacterial cell death and abortive phage infection. A clade E Pycsar system. Its function is as follows. The pyrimidine cyclase gene of a two-gene Pycsar system, generates cyclic CMP (cCMP) from CTP in response to bacteriophage infection. Has little to no activity on ATP, GTP or UTP. Expression of this and adjacent effector EcPycTM (AC P0DV25) confers resistance to bacteriophage P1 and T5; expression of this gene alone does not confer resistance. When cells expressing the Pycsar system are infected by phage T5 at low multiplicity of infection (0.2 MOI) the culture survives, at 2.0 MOI bacteria enter growth arrest. The same cells enter growth arrest after exposure to 250 uM cCMP but not cUMP; thus the effector protein responds only to the cNMP produced by its cognate NTP cyclase. Some of the cells treated with cCMP have abnormal membrane protrusions. The chain is Cytidylate cyclase from Escherichia coli.